The sequence spans 591 residues: MSWLFGIKGPKGEGTGPPLPLPPAQPGAESGGDRGAGDRPSPKDKWSNFDPTGLERAAKAARELEHSRHAKEALNLAQMQEQTLQLEQQSKLKEYEAAVEQLKSEQIRVQAEERRKTLNEETRQHQARAQYQDKLARQRYEDQLKQQQLLNEENLRKQEESVQKQEAIRRATVEREMELRHKNEMLRVEAEARARAKADRENADIIREQIRLKAAEHRQTILESIRTAGTLFGEGFRAFVTDWDKVTATVAGLTLLAVGVYSAKNATSVAGRYIEARLGKPSLVRETSRISVLEALRHPIQVSRRLVSRPQDALEGVILSPSLEARVRDIAIATRNTKKNKSLYRNVLMYGPPGTGKTLFAKKLALHSGMDYAIMTGGDVAPMGREGVTAMHKVFDWASTSRRGLLLFVDEADAFLRKRATEKISEDLRATLNAFLHRTGQHSNKFMLVLASNQPEQFDWAINDRIDEMVCFALPQREERERLVRMYFDKYVLKPATEGKQRLKVAQFDYGKKCSEVAQLTAGMSGREIAQLAVAWQAMAYSSEDGVLTEAMMDARVQDAVQQHQQKMQWLKVERPDSEASKPPHPSLLSC.

Positions 1–52 (MSWLFGIKGPKGEGTGPPLPLPPAQPGAESGGDRGAGDRPSPKDKWSNFDPT) are disordered. Ser-2 bears the N-acetylserine mark. Residues 2–49 (SWLFGIKGPKGEGTGPPLPLPPAQPGAESGGDRGAGDRPSPKDKWSNF) form a required for interaction with the inner surface of the mitochondrial outer membrane region. Residues 2–245 (SWLFGIKGPK…FRAFVTDWDK (244 aa)) are Mitochondrial intermembrane-facing. A compositionally biased stretch (basic and acidic residues) spans 31-47 (GGDRGAGDRPSPKDKWS). Positions 55-216 (ERAAKAAREL…REQIRLKAAE (162 aa)) form a coiled coil. A helical transmembrane segment spans residues 246-263 (VTATVAGLTLLAVGVYSA). The Mitochondrial matrix segment spans residues 264–591 (KNATSVAGRY…KPPHPSLLSC (328 aa)). The S100B-binding stretch occupies residues 289–304 (RISVLEALRHPIQVSR). 351 to 358 (GPPGTGKT) serves as a coordination point for ATP. The residue at position 490 (Lys-490) is an N6-acetyllysine; alternate. Lys-490 bears the N6-succinyllysine; alternate mark. An N6-acetyllysine mark is found at Lys-494 and Lys-512.

Belongs to the AAA ATPase family. Can form homooligomers. Homodimer formation at the N-terminus may be regulated by ATP and is required for the interaction with the inner surface of the mitochondrial outer membrane and correct mitochondrial homeostasis. Interacts with components of the mitochondrial ribosome and with other proteins involved in mitochondrial RNA metabolism. May also interact with protein involved in lipid metabolism, including STARD9. May interact with FAM210A. Interacts with GADD45GIP1. Interacts with S100B in a Ca(+2)- and Zn(+2)-dependent manner; this interaction probably occurs in the cytosol prior to mitochondrial targeting. S100B could assist ATAD3A cytoplasmic processing, preventing aggregation and favoring mitochondrial localization. Interacts with HSP60/HSPD1. Interacts with CLPB. Interacts with EIF2AK3/PERK; ATAD3A and EIF2S1/eIF-2-alpha occupy a common binding site within the cytoplasmic loop of EIF2AK3/PERK, leading to prevent EIF2AK3/PERK association with its substrate EIF2S1/eIF-2-alpha.

The protein resides in the mitochondrion inner membrane. It is found in the mitochondrion matrix. Its subcellular location is the mitochondrion nucleoid. It carries out the reaction ATP + H2O = ADP + phosphate + H(+). Essential for mitochondrial network organization, mitochondrial metabolism and cell growth at organism and cellular level. May play an important role in mitochondrial protein synthesis. May also participate in mitochondrial DNA replication. May bind to mitochondrial DNA D-loops and contribute to nucleoid stability. Required for enhanced channeling of cholesterol for hormone-dependent steroidogenesis. Involved in mitochondrial-mediated antiviral innate immunity. Required to protect mitochondria from the PERK-mediated unfolded protein response: specifically inhibits the activity of EIF2AK3/PERK at mitochondria-endoplasmic reticulum contact sites, thereby providing a safe haven for mitochondrial protein translation during endoplasmic reticulum stress. Ability to inhibit EIF2AK3/PERK is independent of its ATPase activity. Also involved in the mitochondrial DNA damage response by promoting signaling between damaged genomes and the mitochondrial membrane, leading to activation of the integrated stress response (ISR). This Rattus norvegicus (Rat) protein is ATPase family AAA domain-containing protein 3A (Atad3a).